Here is a 340-residue protein sequence, read N- to C-terminus: Photosystem II protein D1 (340 aa).

Transmembrane regions (helical) follow at residues 25–42 (YIGW…LATV), 114–129 (HFFL…EWEF), and 138–152 (WIFV…AAAA). H114 is a binding site for chlorophyll a. W122 is a binding site for pheophytin a. Positions 166 and 185 each coordinate [CaMn4O5] cluster. A helical transmembrane segment spans residues 193 to 214 (FHILGVAGVFGGSLFSAMHGSL). A chlorophyll a-binding site is contributed by H194. Residues H211 and 260–261 (SF) each bind a quinone. Position 211 (H211) interacts with Fe cation. H268 serves as a coordination point for Fe cation. A helical membrane pass occupies residues 270 to 284 (FLAAWPVIGIWITSL). [CaMn4O5] cluster contacts are provided by H328, E329, D338, and A340.

It belongs to the reaction center PufL/M/PsbA/D family. As to quaternary structure, PSII is composed of 1 copy each of membrane proteins PsbA, PsbB, PsbC, PsbD, PsbE, PsbF, PsbH, PsbI, PsbJ, PsbK, PsbL, PsbM, PsbT, PsbX, PsbY, PsbZ, Psb30/Ycf12, at least 3 peripheral proteins of the oxygen-evolving complex and a large number of cofactors. It forms dimeric complexes. The D1/D2 heterodimer binds P680, chlorophylls that are the primary electron donor of PSII, and subsequent electron acceptors. It shares a non-heme iron and each subunit binds pheophytin, quinone, additional chlorophylls, carotenoids and lipids. D1 provides most of the ligands for the Mn4-Ca-O5 cluster of the oxygen-evolving complex (OEC). There is also a Cl(-1) ion associated with D1 and D2, which is required for oxygen evolution. The PSII complex binds additional chlorophylls, carotenoids and specific lipids. serves as cofactor. In terms of processing, tyr-157 forms a radical intermediate that is referred to as redox-active TyrZ, YZ or Y-Z.

It localises to the plastid. The protein resides in the chloroplast thylakoid membrane. The enzyme catalyses 2 a plastoquinone + 4 hnu + 2 H2O = 2 a plastoquinol + O2. Its function is as follows. Photosystem II (PSII) is a light-driven water:plastoquinone oxidoreductase that uses light energy to abstract electrons from H(2)O, generating O(2) and a proton gradient subsequently used for ATP formation. It consists of a core antenna complex that captures photons, and an electron transfer chain that converts photonic excitation into a charge separation. The D1/D2 (PsbA/PsbD) reaction center heterodimer binds P680, the primary electron donor of PSII as well as several subsequent electron acceptors. This chain is Photosystem II protein D1, found in Amphidinium carterae (Dinoflagellate).